A 180-amino-acid chain; its full sequence is UDP-4-amino-4,6-dideoxy-N-acetyl-beta-L-altrosamine N-acetyltransferase (180 aa).

One can recognise an N-acetyltransferase domain in the interval Ile-13–Lys-169.

The catalysed reaction is UDP-4-amino-4,6-dideoxy-N-acetyl-beta-L-altrosamine + acetyl-CoA = UDP-2,4-diacetamido-2,4,6-trideoxy-beta-L-altrose + CoA + H(+). Its function is as follows. Catalyzes the third step in the biosynthesis of pseudaminic acid, a sialic-acid-like sugar that is used to modify flagellin. Mediates N-4 acetylation of UDP-4-amino-4,6-dideoxy-beta-L-AltNAc to form UDP-2,4-diacetamido-2,4,6-trideoxy-beta-L-altropyranose. The protein is UDP-4-amino-4,6-dideoxy-N-acetyl-beta-L-altrosamine N-acetyltransferase (pseH) of Helicobacter pylori (strain ATCC 700392 / 26695) (Campylobacter pylori).